A 91-amino-acid chain; its full sequence is MVSFNATAILLVLVANAFSKPLYVPEHCVGMSGTLFQACIRQTMVDTTGMYTNSAMSYDGTTIPFDRDGIVHQDHYTDTKPTPLSDVGFSV.

Positions 1-19 (MVSFNATAILLVLVANAFS) are cleaved as a signal peptide.

This Tylonycteris pachypus (Lesser bamboo bat) protein is Non-structural protein 3a.